The following is a 192-amino-acid chain: Adenylate kinase (192 aa).

10–18 (GVPGVGGTT) contributes to the ATP binding site.

It belongs to the archaeal adenylate kinase family. Monomer.

It localises to the cytoplasm. The catalysed reaction is AMP + ATP = 2 ADP. The sequence is that of Adenylate kinase (adkA) from Methanothermococcus thermolithotrophicus (Methanococcus thermolithotrophicus).